The primary structure comprises 405 residues: MTVLEESADASSRRLAQRANGPATVLAIGTANPANVFEQSSYPDFYFDITNSQHMTELKLKFSRMCQKSGIKKRYMHLNSEILKANPSLCAYWEKSLDVRQDIAVVEVPKLGKEASLKAIKEWGQPKSKITHLVFCTTSGVDMPGADWALTKLLGLRPSVKRLMMYQQGCFAGGTVLRVAKDVAENNKGARVLVVCSEITCVTFRGPSETHLDSLVGQALFGDGAAAVILGSDPLPEENPCFELHWSGSNILPDSDGAIDGHLREVGLTFHLMKDVPGIISKNIGKVLNDAFRSAFDESGNAEDRPASVNDIFWIAHPGGPAILDQVEEKMKLAPEKMRATRDVLSEYGNMSSACVLFIMDHMRRMSAQNKLQTTGEGLDWGVLLGFGPGLTVETVLLKSIRLAC.

The active site involves Cys170.

The protein belongs to the thiolase-like superfamily. Chalcone/stilbene synthases family.

The catalysed reaction is (E)-4-coumaroyl-CoA + 3 malonyl-CoA + 3 H(+) = 2',4,4',6'-tetrahydroxychalcone + 3 CO2 + 4 CoA. It participates in secondary metabolite biosynthesis; flavonoid biosynthesis. The primary product of this enzyme is 4,2',4',6'-tetrahydroxychalcone (also termed naringenin-chalcone or chalcone) which can under specific conditions spontaneously isomerize into naringenin. This is Chalcone synthase (CHS) from Equisetum arvense (Field horsetail).